The following is a 200-amino-acid chain: CASP-like protein 1D2 (200 aa).

The interval 1 to 26 is disordered; it reads MASTENPDPETGKSEPIPASATTPPP. The Cytoplasmic portion of the chain corresponds to 1-36; that stretch reads MASTENPDPETGKSEPIPASATTPPPSAASFLDCRK. Residues 37-57 traverse the membrane as a helical segment; sequence IDVIIRVLLFSATLTALIVMV. The Extracellular segment spans residues 58 to 85; that stretch reads TSDQTEKTQLPGVSSPAPVSAEFNDSPA. The chain crosses the membrane as a helical span at residues 86-106; sequence FIFFVVALVVTSFYALMSTLV. The Cytoplasmic portion of the chain corresponds to 107 to 129; the sequence is SISLLLKPEFTARVSVYLASLDM. A helical transmembrane segment spans residues 130–150; that stretch reads VMLGILASATGTAGGVAYIAL. The Extracellular portion of the chain corresponds to 151–171; that stretch reads KGNKEVGWNKICNVYDKFCRY. The chain crosses the membrane as a helical span at residues 172–192; it reads IATSLALSLFATLLLLVLSIC. At 193–200 the chain is on the cytoplasmic side; sequence SALSKRTP.

It belongs to the Casparian strip membrane proteins (CASP) family. As to quaternary structure, homodimer and heterodimers.

The protein localises to the cell membrane. In Arabidopsis lyrata subsp. lyrata (Lyre-leaved rock-cress), this protein is CASP-like protein 1D2.